The chain runs to 99 residues: Large ribosomal subunit protein bL27 (99 aa).

The propeptide occupies 1-9 (MLIMNLQLF).

The protein belongs to the bacterial ribosomal protein bL27 family. Post-translationally, the N-terminus is cleaved by ribosomal processing cysteine protease Prp.

The protein is Large ribosomal subunit protein bL27 of Clostridium beijerinckii (strain ATCC 51743 / NCIMB 8052) (Clostridium acetobutylicum).